We begin with the raw amino-acid sequence, 752 residues long: Photosystem I P700 chlorophyll a apoprotein A1 (752 aa).

A run of 8 helical transmembrane segments spans residues 73-96 (IFSAHFGHLAVVFIWLSGAYFHGA), 159-182 (LYVTAIGALVMAALMLFAGWFHYH), 198-222 (MNHHLAGLFGLGSLSWAGHQIHVSL), 294-312 (RAHHHLAIAVLFIVAGHMY), 349-372 (WHAQLSLNLALFGSLSIIVAHHMY), 388-414 (LCLFTHHVWIGGFLIVGAGAHAAIFMV), 436-458 (AIISHLNWVCIFLGFHSFGLYIH), and 533-551 (FLVHHIHAFTIHVTVLILL). [4Fe-4S] cluster is bound by residues Cys-575 and Cys-584. 2 consecutive transmembrane segments (helical) span residues 591-612 (HVFLGLFWMYNSLSVVLFHFSW) and 666-688 (LSAYGLMFLGAHFIWAFSLMFLF). His-677 contributes to the chlorophyll a' binding site. Chlorophyll a contacts are provided by Met-685 and Tyr-693. Trp-694 lines the phylloquinone pocket. Residues 726–746 (AVGVAHYLLGGIATTWSFFHA) form a helical membrane-spanning segment.

Belongs to the PsaA/PsaB family. The PsaA/B heterodimer binds the P700 chlorophyll special pair and subsequent electron acceptors. PSI consists of a core antenna complex that captures photons, and an electron transfer chain that converts photonic excitation into a charge separation. The eukaryotic PSI reaction center is composed of at least 11 subunits. P700 is a chlorophyll a/chlorophyll a' dimer, A0 is one or more chlorophyll a, A1 is one or both phylloquinones and FX is a shared 4Fe-4S iron-sulfur center. serves as cofactor.

The protein resides in the plastid. It is found in the cyanelle thylakoid membrane. It catalyses the reaction reduced [plastocyanin] + hnu + oxidized [2Fe-2S]-[ferredoxin] = oxidized [plastocyanin] + reduced [2Fe-2S]-[ferredoxin]. Functionally, psaA and PsaB bind P700, the primary electron donor of photosystem I (PSI), as well as the electron acceptors A0, A1 and FX. PSI is a cytochrome c6-ferredoxin oxidoreductase, converting photonic excitation into a charge separation, which transfers an electron from the donor P700 chlorophyll pair to the spectroscopically characterized acceptors A0, A1, FX, FA and FB in turn. Oxidized P700 is reduced on the lumenal side of the thylakoid membrane by cytochrome c6. The chain is Photosystem I P700 chlorophyll a apoprotein A1 from Cyanophora paradoxa.